A 147-amino-acid polypeptide reads, in one-letter code: Plasminogen receptor (KT) (147 aa).

The Extracellular portion of the chain corresponds to 1–52 (MGFIFSKSMNENMKNQQEFMVMHARLQLERQLIMQNEMRERQMAMQIAWSRE). Residues 53-73 (FLKYFGTFFGIATISLAAGAI) traverse the membrane as a helical segment. The Cytoplasmic portion of the chain corresponds to 74–78 (KRKKP). Residues 79–99 (AFLIPIVPLSFIFTYQYDLGY) traverse the membrane as a helical segment. The Extracellular portion of the chain corresponds to 100–147 (GTLLQRMKSEAEDILETEKTKLELPKGLITFESLEKARREQSKFFSDK).

Interacts with PLAT. Interacts with PLAUR. In terms of tissue distribution, expressed in adrenal medulla (pheochromocytoma).

It is found in the cell membrane. In terms of biological role, receptor for plasminogen. Regulates urokinase plasminogen activator-dependent and stimulates tissue-type plasminogen activator-dependent cell surface plasminogen activation. Proposed to be part of a local catecholaminergic cell plasminogen activation system that regulates neuroendocrine prohormone processing. Involved in regulation of inflammatory response; regulates monocyte chemotactic migration and matrix metalloproteinase activation, such as of MMP2 and MMP9. The protein is Plasminogen receptor (KT) (Plgrkt) of Rattus norvegicus (Rat).